The sequence spans 215 residues: Ribonuclease T (215 aa).

The 175-residue stretch at 20–194 (VVIDVETAGF…YDTLQTAKLF (175 aa)) folds into the Exonuclease domain. Mg(2+) contacts are provided by D23, E25, H181, and D186. H181 functions as the Proton donor/acceptor in the catalytic mechanism.

It belongs to the RNase T family. Homodimer. It depends on Mg(2+) as a cofactor.

Trims short 3' overhangs of a variety of RNA species, leaving a one or two nucleotide 3' overhang. Responsible for the end-turnover of tRNA: specifically removes the terminal AMP residue from uncharged tRNA (tRNA-C-C-A). Also appears to be involved in tRNA biosynthesis. The polypeptide is Ribonuclease T (Yersinia pestis).